The primary structure comprises 86 residues: MDPVDPNLEPWNHPGSQPKTACNRCHCKKCCYHCQVCFITKGLGISYGRKKRRQRRRPSQGGQTHQDPIPKQPSSQPRGNPTGPKE.

Residues 1–21 form a disordered region; that stretch reads MDPVDPNLEPWNHPGSQPKTA. The interaction with human CREBBP stretch occupies residues 1–24; sequence MDPVDPNLEPWNHPGSQPKTACNR. The interval 1–48 is transactivation; it reads MDPVDPNLEPWNHPGSQPKTACNRCHCKKCCYHCQVCFITKGLGISYG. C22, C25, and C27 together coordinate Zn(2+). Residues 22–37 are cysteine-rich; sequence CNRCHCKKCCYHCQVC. K28 bears the N6-acetyllysine; by host PCAF mark. The Zn(2+) site is built by C30, H33, C34, and C37. The interval 38 to 48 is core; sequence FITKGLGISYG. Residues 47–86 are disordered; that stretch reads YGRKKRRQRRRPSQGGQTHQDPIPKQPSSQPRGNPTGPKE. Basic residues predominate over residues 48–58; it reads GRKKRRQRRRP. The Nuclear localization signal, RNA-binding (TAR), and protein transduction motif lies at 49 to 57; it reads RKKRRQRRR. Residues 49–86 form an interaction with the host capping enzyme RNGTT region; the sequence is RKKRRQRRRPSQGGQTHQDPIPKQPSSQPRGNPTGPKE. Residues K50 and K51 each carry the N6-acetyllysine; by host EP300 and GCN5L2 modification. An asymmetric dimethylarginine; by host PRMT6 mark is found at R52 and R53. The segment covering 60 to 79 has biased composition (polar residues); the sequence is QGGQTHQDPIPKQPSSQPRG. K71 is covalently cross-linked (Glycyl lysine isopeptide (Lys-Gly) (interchain with G-Cter in ubiquitin)).

This sequence belongs to the lentiviruses Tat family. As to quaternary structure, interacts with host CCNT1. Associates with the P-TEFb complex composed at least of Tat, P-TEFb (CDK9 and CCNT1), TAR RNA, RNA Pol II. Recruits the HATs CREBBP, TAF1/TFIID, EP300, PCAF and GCN5L2. Interacts with host KAT5/Tip60; this interaction targets the latter to degradation. Interacts with the host deacetylase SIRT1. Interacts with host capping enzyme RNGTT; this interaction stimulates RNGTT. Binds to host KDR, and to the host integrins ITGAV/ITGB3 and ITGA5/ITGB1. Interacts with host KPNB1/importin beta-1 without previous binding to KPNA1/importin alpha-1. Interacts with EIF2AK2. Interacts with host nucleosome assembly protein NAP1L1; this interaction may be required for the transport of Tat within the nucleus, since the two proteins interact at the nuclear rim. Interacts with host C1QBP/SF2P32; this interaction involves lysine-acetylated Tat. Interacts with the host chemokine receptors CCR2, CCR3 and CXCR4. Interacts with host DPP4/CD26; this interaction may trigger an anti-proliferative effect. Interacts with host LDLR. Interacts with the host extracellular matrix metalloproteinase MMP1. Interacts with host PRMT6; this interaction mediates Tat's methylation. Interacts with, and is ubiquitinated by MDM2/Hdm2. Interacts with host PSMC3 and HTATIP2. Interacts with STAB1; this interaction may overcome SATB1-mediated repression of IL2 and IL2RA (interleukin) in T cells by binding to the same domain than HDAC1. Interacts (when acetylated) with human CDK13, thereby increasing HIV-1 mRNA splicing and promoting the production of the doubly spliced HIV-1 protein Nef. Interacts with host TBP; this interaction modulates the activity of transcriptional pre-initiation complex. Interacts with host RELA. Interacts with host PLSCR1; this interaction negatively regulates Tat transactivation activity by altering its subcellular distribution. In terms of processing, asymmetrical arginine methylation by host PRMT6 seems to diminish the transactivation capacity of Tat and affects the interaction with host CCNT1. Post-translationally, acetylation by EP300, CREBBP, GCN5L2/GCN5 and PCAF regulates the transactivation activity of Tat. EP300-mediated acetylation of Lys-50 promotes dissociation of Tat from the TAR RNA through the competitive binding to PCAF's bromodomain. In addition, the non-acetylated Tat's N-terminus can also interact with PCAF. PCAF-mediated acetylation of Lys-28 enhances Tat's binding to CCNT1. Lys-50 is deacetylated by SIRT1. Polyubiquitination by host MDM2 does not target Tat to degradation, but activates its transactivation function and fosters interaction with CCNT1 and TAR RNA. In terms of processing, phosphorylated by EIF2AK2 on serine and threonine residues adjacent to the basic region important for TAR RNA binding and function. Phosphorylation of Tat by EIF2AK2 is dependent on the prior activation of EIF2AK2 by dsRNA.

It localises to the host nucleus. Its subcellular location is the host nucleolus. The protein localises to the host cytoplasm. It is found in the secreted. Its function is as follows. Transcriptional activator that increases RNA Pol II processivity, thereby increasing the level of full-length viral transcripts. Recognizes a hairpin structure at the 5'-LTR of the nascent viral mRNAs referred to as the transactivation responsive RNA element (TAR) and recruits the cyclin T1-CDK9 complex (P-TEFb complex) that will in turn hyperphosphorylate the RNA polymerase II to allow efficient elongation. The CDK9 component of P-TEFb and other Tat-activated kinases hyperphosphorylate the C-terminus of RNA Pol II that becomes stabilized and much more processive. Other factors such as HTATSF1/Tat-SF1, SUPT5H/SPT5, and HTATIP2 are also important for Tat's function. Besides its effect on RNA Pol II processivity, Tat induces chromatin remodeling of proviral genes by recruiting the histone acetyltransferases (HATs) CREBBP, EP300 and PCAF to the chromatin. This also contributes to the increase in proviral transcription rate, especially when the provirus integrates in transcriptionally silent region of the host genome. To ensure maximal activation of the LTR, Tat mediates nuclear translocation of NF-kappa-B by interacting with host RELA. Through its interaction with host TBP, Tat may also modulate transcription initiation. Tat can reactivate a latently infected cell by penetrating in it and transactivating its LTR promoter. In the cytoplasm, Tat is thought to act as a translational activator of HIV-1 mRNAs. In terms of biological role, extracellular circulating Tat can be endocytosed by surrounding uninfected cells via the binding to several surface receptors such as CD26, CXCR4, heparan sulfate proteoglycans (HSPG) or LDLR. Neurons are rarely infected, but they internalize Tat via their LDLR. Through its interaction with nuclear HATs, Tat is potentially able to control the acetylation-dependent cellular gene expression. Modulates the expression of many cellular genes involved in cell survival, proliferation or in coding for cytokines or cytokine receptors. Tat plays a role in T-cell and neurons apoptosis. Tat induced neurotoxicity and apoptosis probably contribute to neuroAIDS. Circulating Tat also acts as a chemokine-like and/or growth factor-like molecule that binds to specific receptors on the surface of the cells, affecting many cellular pathways. In the vascular system, Tat binds to ITGAV/ITGB3 and ITGA5/ITGB1 integrins dimers at the surface of endothelial cells and competes with bFGF for heparin-binding sites, leading to an excess of soluble bFGF. In Homo sapiens (Human), this protein is Protein Tat.